The following is a 396-amino-acid chain: ATP-dependent RNA helicase eIF4A (396 aa).

The Q motif signature appears at 22–50 (YSFDDLNLKPNIVRGIFGYGYESPSAIQQ). The 171-residue stretch at 53–223 (ILPITEGRDV…TKFMNNPVRI (171 aa)) folds into the Helicase ATP-binding domain. 66-73 (AQSGTGKT) contacts ATP. Residues 171-174 (DEAD) carry the DEAD box motif. One can recognise a Helicase C-terminal domain in the interval 234-395 (GIKQFYINVE…EMPANIGELF (162 aa)).

This sequence belongs to the DEAD box helicase family. eIF4A subfamily. In terms of assembly, component of the eIF4F complex, which composition varies with external and internal environmental conditions. It is composed of at least eIF4A, eIF4E and eIF4G.

The protein localises to the cytoplasm. It catalyses the reaction ATP + H2O = ADP + phosphate + H(+). ATP-dependent RNA helicase which is a subunit of the eIF4F complex involved in cap recognition and is required for mRNA binding to ribosome. In the current model of translation initiation, eIF4A unwinds RNA secondary structures in the 5'-UTR of mRNAs which is necessary to allow efficient binding of the small ribosomal subunit, and subsequent scanning for the initiator codon. In Meyerozyma guilliermondii (strain ATCC 6260 / CBS 566 / DSM 6381 / JCM 1539 / NBRC 10279 / NRRL Y-324) (Yeast), this protein is ATP-dependent RNA helicase eIF4A (TIF1).